We begin with the raw amino-acid sequence, 492 residues long: GTPase Der (492 aa).

EngA-type G domains follow at residues 3–166 and 205–378; these read PVVA…VDEV and IKLA…DSAT. GTP contacts are provided by residues 9–16, 56–60, 118–121, 211–218, 258–262, and 323–326; these read GRPNVGKS, DTGGI, NKTD, DTAGV, and NKWD. One can recognise a KH-like domain in the interval 379–463; sequence RRVSTAMLTR…PIRIQFKEGE (85 aa).

It belongs to the TRAFAC class TrmE-Era-EngA-EngB-Septin-like GTPase superfamily. EngA (Der) GTPase family. As to quaternary structure, associates with the 50S ribosomal subunit.

GTPase that plays an essential role in the late steps of ribosome biogenesis. This is GTPase Der from Klebsiella pneumoniae subsp. pneumoniae (strain ATCC 700721 / MGH 78578).